Consider the following 31-residue polypeptide: Cyclotide mech-4 (31 aa).

A cross-link (cyclopeptide (Gly-Asp)) is located at residues 1-31; that stretch reads GSIPCGESCVYIPCISSLLGCSCKSKVCYKD. 3 disulfide bridges follow: Cys5/Cys21, Cys9/Cys23, and Cys14/Cys28.

This is a cyclic peptide. Post-translationally, contains 3 disulfide bonds.

Probably participates in a plant defense mechanism (Potential). Binds to and induces leakage in phospholipd membranes, particularly ones containing 1-palmitoyl-2-oleophosphatidylethanolamine (POPE). This is Cyclotide mech-4 from Melicytus chathamicus (Chatham Island mahoe).